An 800-amino-acid polypeptide reads, in one-letter code: DNA topoisomerase 1 (800 aa).

The Toprim domain maps to M1–V111. Mg(2+) contacts are provided by E7 and D80. Positions D132 to E568 constitute a Topo IA-type catalytic domain. Residues S166–Q171 are interaction with DNA. Residue Y304 is the O-(5'-phospho-DNA)-tyrosine intermediate of the active site. The C4-type zinc-finger motif lies at C600 to C627.

Belongs to the type IA topoisomerase family. Monomer. The cofactor is Mg(2+).

The catalysed reaction is ATP-independent breakage of single-stranded DNA, followed by passage and rejoining.. Its function is as follows. Releases the supercoiling and torsional tension of DNA, which is introduced during the DNA replication and transcription, by transiently cleaving and rejoining one strand of the DNA duplex. Introduces a single-strand break via transesterification at a target site in duplex DNA. The scissile phosphodiester is attacked by the catalytic tyrosine of the enzyme, resulting in the formation of a DNA-(5'-phosphotyrosyl)-enzyme intermediate and the expulsion of a 3'-OH DNA strand. The free DNA strand then undergoes passage around the unbroken strand, thus removing DNA supercoils. Finally, in the religation step, the DNA 3'-OH attacks the covalent intermediate to expel the active-site tyrosine and restore the DNA phosphodiester backbone. The polypeptide is DNA topoisomerase 1 (Rickettsia bellii (strain RML369-C)).